Reading from the N-terminus, the 1501-residue chain is Multidrug resistance protein CDR1 (1501 aa).

The segment at 1 to 30 (MSDSKMSSQDESKLEKAISQDSSSENHSIN) is disordered. Topologically, residues 1 to 513 (MSDSKMSSQD…NFLRMKGDPS (513 aa)) are cytoplasmic. Residues 8–18 (SQDESKLEKAI) show a composition bias toward basic and acidic residues. The ABC transporter 1 domain occupies 150 to 404 (LATEGFRHFQ…FEKMGWKCPQ (255 aa)). A helical membrane pass occupies residues 514–534 (IPIFSVFGQLVMGLILSSVFY). A glycan (N-linked (GlcNAc...) asparagine) is linked at N535. 4 helical membrane passes run 549–569 (AMFF…MSLF), 598–618 (LPVK…MVNF), 623–643 (GRFF…SHLF), and 655–675 (GAMT…GFVI). N-linked (GlcNAc...) asparagine glycosylation is present at N724. The chain crosses the membrane as a helical span at residues 765-785 (LGITIGFAVFFLAIYIALTEF). The Cytoplasmic portion of the chain corresponds to 786–1195 (NKGAMQKGEI…TIVQDWRSPG (410 aa)). Residues 859–1103 (FFWRDLTYQV…MINYFEKYGA (245 aa)) enclose the ABC transporter 2 domain. 895-902 (GASGAGKT) provides a ligand contact to ATP. Transmembrane regions (helical) follow at residues 1196-1216 (YIYS…FSFF), 1230-1250 (FSVF…LPYF), 1281-1301 (IPYQ…PLGL), 1315-1335 (GVLM…MGQL), 1356-1376 (MCLN…FWIF), and 1467-1487 (FGIF…FYWL).

It belongs to the ABC transporter superfamily. ABCG family. PDR (TC 3.A.1.205) subfamily.

It localises to the membrane. Functionally, transporter, whose physiological function is not yet established. Confers resistance to the chemical cycloheximide. This Candida albicans (Yeast) protein is Multidrug resistance protein CDR1 (CDR1).